The primary structure comprises 92 residues: UPF0223 protein SPCG_1392 (92 aa).

Belongs to the UPF0223 family.

In Streptococcus pneumoniae (strain CGSP14), this protein is UPF0223 protein SPCG_1392.